A 148-amino-acid polypeptide reads, in one-letter code: Fluoride-specific ion channel FluC 2 (148 aa).

The next 4 helical transmembrane spans lie at 23 to 43, 61 to 81, 92 to 112, and 120 to 140; these read LGHLGWIFAGGALGAAARLAV, GTLAANAAGSFLIAIFGTLIF, FWVLGFLGSLTTFSSYALHTL, and LLGGLYGGGSLLLGLLAALAG. Na(+)-binding residues include Gly-99 and Thr-102.

This sequence belongs to the fluoride channel Fluc/FEX (TC 1.A.43) family.

Its subcellular location is the cell membrane. It catalyses the reaction fluoride(in) = fluoride(out). With respect to regulation, na(+) is not transported, but it plays an essential structural role and its presence is essential for fluoride channel function. Its function is as follows. Fluoride-specific ion channel. Important for reducing fluoride concentration in the cell, thus reducing its toxicity. The protein is Fluoride-specific ion channel FluC 2 of Rubrobacter xylanophilus (strain DSM 9941 / JCM 11954 / NBRC 16129 / PRD-1).